Consider the following 417-residue polypeptide: Tyrosine--tRNA ligase (417 aa).

Position 39 (Y39) interacts with L-tyrosine. A 'HIGH' region motif is present at residues 44–53 (CTAPSLHVGH). L-tyrosine is bound by residues Y176 and Q180. Positions 236-240 (KMGKT) match the 'KMSKS' region motif. K239 serves as a coordination point for ATP. The 68-residue stretch at 350-417 (AGVLALFVKA…KKRHVLLRPA (68 aa)) folds into the S4 RNA-binding domain.

It belongs to the class-I aminoacyl-tRNA synthetase family. TyrS type 1 subfamily. Homodimer.

Its subcellular location is the cytoplasm. The catalysed reaction is tRNA(Tyr) + L-tyrosine + ATP = L-tyrosyl-tRNA(Tyr) + AMP + diphosphate + H(+). In terms of biological role, catalyzes the attachment of tyrosine to tRNA(Tyr) in a two-step reaction: tyrosine is first activated by ATP to form Tyr-AMP and then transferred to the acceptor end of tRNA(Tyr). This chain is Tyrosine--tRNA ligase, found in Nitrobacter winogradskyi (strain ATCC 25391 / DSM 10237 / CIP 104748 / NCIMB 11846 / Nb-255).